The following is a 754-amino-acid chain: Phosphoribosylformylglycinamidine synthase subunit PurL (754 aa).

H52 is a catalytic residue. ATP is bound by residues Y55 and K95. Position 97 (E97) interacts with Mg(2+). Residues 98–101 (SHNH) and R120 each bind substrate. Residue H99 is the Proton acceptor of the active site. D121 lines the Mg(2+) pocket. Q244 is a substrate binding site. A Mg(2+)-binding site is contributed by D272. Residue 316–318 (ESQ) participates in substrate binding. The ATP site is built by N504 and G541. N542 provides a ligand contact to Mg(2+). S544 contributes to the substrate binding site.

It belongs to the FGAMS family. As to quaternary structure, monomer. Part of the FGAM synthase complex composed of 1 PurL, 1 PurQ and 2 PurS subunits.

It localises to the cytoplasm. It carries out the reaction N(2)-formyl-N(1)-(5-phospho-beta-D-ribosyl)glycinamide + L-glutamine + ATP + H2O = 2-formamido-N(1)-(5-O-phospho-beta-D-ribosyl)acetamidine + L-glutamate + ADP + phosphate + H(+). It participates in purine metabolism; IMP biosynthesis via de novo pathway; 5-amino-1-(5-phospho-D-ribosyl)imidazole from N(2)-formyl-N(1)-(5-phospho-D-ribosyl)glycinamide: step 1/2. In terms of biological role, part of the phosphoribosylformylglycinamidine synthase complex involved in the purines biosynthetic pathway. Catalyzes the ATP-dependent conversion of formylglycinamide ribonucleotide (FGAR) and glutamine to yield formylglycinamidine ribonucleotide (FGAM) and glutamate. The FGAM synthase complex is composed of three subunits. PurQ produces an ammonia molecule by converting glutamine to glutamate. PurL transfers the ammonia molecule to FGAR to form FGAM in an ATP-dependent manner. PurS interacts with PurQ and PurL and is thought to assist in the transfer of the ammonia molecule from PurQ to PurL. This Salinibacter ruber (strain DSM 13855 / M31) protein is Phosphoribosylformylglycinamidine synthase subunit PurL.